The sequence spans 1993 residues: [F-actin]-monooxygenase MICAL3 (1993 aa).

The tract at residues 2–494 (EERKQETTNQ…RHLYDSGETK (493 aa)) is monooxygenase domain. FAD contacts are provided by residues C97, 116–118 (EKR), 123–125 (RNN), F183, Y298, and D398. A Calponin-homology (CH) domain is found at 518 to 624 (VARSSKLLGW…YLTQFYEMFK (107 aa)). S649 carries the post-translational modification Phosphoserine. Positions 658 to 704 (GQTISRKRSPKDKKEKDSDGAGKRRKTSQSEEEEPPRSYKGERPTLV) are disordered. Basic and acidic residues predominate over residues 669-679 (DKKEKDSDGAG). Residues S685 and S687 each carry the phosphoserine modification. One can recognise an LIM zinc-binding domain in the interval 762 to 824 (DTCYFCQKRV…KPHYCYRLSG (63 aa)). Zn(2+)-binding residues include C764, C767, H785, C788, C791, C794, C814, and H817. Positions 854–886 (NGLASVAASSAERSPGTSMNGLEEPSIAKRLRG) are disordered. Over residues 860–873 (AASSAERSPGTSMN) the composition is skewed to polar residues. Phosphothreonine is present on T887. Disordered stretches follow at residues 905-1023 (ELEE…RLQQ), 1039-1309 (WTHI…LSGP), 1332-1546 (IRRS…FFTP), and 1559-1837 (KENG…EELK). The span at 938–951 (SEMEEEEEEDDEDD) shows a compositional bias: acidic residues. Over residues 975–988 (GRSEEELEASKNFE) the composition is skewed to basic and acidic residues. S977 carries the phosphoserine modification. The span at 989-1014 (PEEEEEEEEYEEEDEEYEEEEEEESS) shows a compositional bias: acidic residues. Basic and acidic residues predominate over residues 1039 to 1051 (WTHIREREAEERM). The span at 1065–1090 (DEDDLEEDADSEPAETEGEAAEDGDP) shows a compositional bias: acidic residues. A compositionally biased stretch (basic and acidic residues) spans 1111–1148 (EAEHRLQSQAKVKAELELRVSENEEEKPSDAPKQEERG). Phosphoserine is present on residues S1131 and S1187. The segment covering 1199-1212 (LREKPKAEVPEEQK) has biased composition (basic and acidic residues). Polar residues predominate over residues 1230–1239 (SPTSPTSLQP). Residues 1245–1255 (PPTPPTPPPTQ) show a composition bias toward pro residues. Residues 1257–1275 (PICSQPQPSSDASIPSPTK) are compositionally biased toward polar residues. S1272 carries the phosphoserine modification. T1274 is subject to Phosphothreonine. 2 positions are modified to phosphoserine: S1276 and S1335. T1339 is subject to Phosphothreonine. Phosphoserine occurs at positions 1369 and 1382. The span at 1405-1420 (PSDKELRSSQEERRDL) shows a compositional bias: basic and acidic residues. A compositionally biased stretch (low complexity) spans 1421-1433 (SSSSGLGLHDSSS). A Phosphoserine modification is found at S1431. Residues 1434–1452 (NMKTLGSQSFNTSDSTMLT) show a composition bias toward polar residues. T1452 carries the post-translational modification Phosphothreonine. The span at 1454–1465 (PSSPPPPPPPNE) shows a compositional bias: pro residues. Residues 1516–1530 (SVDEIPFADDVEDTY) are compositionally biased toward acidic residues. Over residues 1584-1600 (EAKELAEERMRAREKSV) the composition is skewed to basic and acidic residues. Polar residues predominate over residues 1623 to 1633 (SSRSHTAQSQG). Position 1640 is a phosphoserine (S1640). Positions 1665–1685 (SPPSDSGGPDGSVTSSEGSSG) are enriched in low complexity. Over residues 1686–1704 (KSKKRSSLFSPRRNKKEKK) the composition is skewed to basic residues. Residues S1692 and S1695 each carry the phosphoserine modification. Polar residues predominate over residues 1754–1763 (TPSSGATVDS). Basic and acidic residues predominate over residues 1795 to 1811 (ILERSSQKSKREPRTYT). Residues 1817–1983 (AKLTRRVQKA…EEDKDLEAAM (167 aa)) are a coiled coil. The segment covering 1819 to 1830 (LTRRVQKAARRQ) has biased composition (basic residues). In terms of domain architecture, bMERB spans 1832-1981 (KQEELKRLHR…EKEEDKDLEA (150 aa)). Position 1903 is a phosphoserine (S1903).

The protein belongs to the Mical family. In terms of assembly, interacts with RAB1B, RAB8A, RAB10, RAB13 and RAB15 (in their GTP-bound forms); binding to RAB1B is of low affinity compared to other Rab proteins; at least in case of RAB8A can bind 2 molecules of RAB8A simultaneously through a high and a low affinity binding site, respectively. Interacts with ERC1 and RAB8A; may bridge ERC1 with RAB8A. Interacts with KIF23 and ERC1; enhances the interaction between KIF23 and ERC1. Interacts with NINL. Requires FAD as cofactor.

It localises to the cytoplasm. The protein resides in the cell cortex. The protein localises to the cytoskeleton. Its subcellular location is the nucleus. It is found in the midbody. It localises to the spindle. The protein resides in the cilium basal body. The catalysed reaction is L-methionyl-[F-actin] + NADPH + O2 + H(+) = L-methionyl-(R)-S-oxide-[F-actin] + NADP(+) + H2O. Functionally, monooxygenase that promotes depolymerization of F-actin by mediating oxidation of specific methionine residues on actin to form methionine-sulfoxide, resulting in actin filament disassembly and preventing repolymerization. In the absence of actin, it also functions as a NADPH oxidase producing H(2)O(2). Seems to act as Rab effector protein and play a role in vesicle trafficking. Involved in exocytic vesicles tethering and fusion: the monooxygenase activity is required for this process and implicates RAB8A associated with exocytotic vesicles. Required for cytokinesis. Contributes to stabilization and/or maturation of the intercellular bridge independently of its monooxygenase activity. Promotes recruitment of Rab8 and ERC1 to the intercellular bridge, and together these proteins are proposed to function in timely abscission. This is [F-actin]-monooxygenase MICAL3 (Mical3) from Mus musculus (Mouse).